The chain runs to 287 residues: Phosphatidylserine decarboxylase proenzyme (287 aa).

Catalysis depends on charge relay system; for autoendoproteolytic cleavage activity residues Asp-89, His-146, and Ser-252. Catalysis depends on Ser-252, which acts as the Schiff-base intermediate with substrate; via pyruvic acid; for decarboxylase activity. At Ser-252 the chain carries Pyruvic acid (Ser); by autocatalysis.

Belongs to the phosphatidylserine decarboxylase family. PSD-B subfamily. Prokaryotic type I sub-subfamily. As to quaternary structure, heterodimer of a large membrane-associated beta subunit and a small pyruvoyl-containing alpha subunit. Pyruvate serves as cofactor. In terms of processing, is synthesized initially as an inactive proenzyme. Formation of the active enzyme involves a self-maturation process in which the active site pyruvoyl group is generated from an internal serine residue via an autocatalytic post-translational modification. Two non-identical subunits are generated from the proenzyme in this reaction, and the pyruvate is formed at the N-terminus of the alpha chain, which is derived from the carboxyl end of the proenzyme. The autoendoproteolytic cleavage occurs by a canonical serine protease mechanism, in which the side chain hydroxyl group of the serine supplies its oxygen atom to form the C-terminus of the beta chain, while the remainder of the serine residue undergoes an oxidative deamination to produce ammonia and the pyruvoyl prosthetic group on the alpha chain. During this reaction, the Ser that is part of the protease active site of the proenzyme becomes the pyruvoyl prosthetic group, which constitutes an essential element of the active site of the mature decarboxylase.

The protein localises to the cell membrane. The catalysed reaction is a 1,2-diacyl-sn-glycero-3-phospho-L-serine + H(+) = a 1,2-diacyl-sn-glycero-3-phosphoethanolamine + CO2. It functions in the pathway phospholipid metabolism; phosphatidylethanolamine biosynthesis; phosphatidylethanolamine from CDP-diacylglycerol: step 2/2. Its function is as follows. Catalyzes the formation of phosphatidylethanolamine (PtdEtn) from phosphatidylserine (PtdSer). The sequence is that of Phosphatidylserine decarboxylase proenzyme from Shewanella woodyi (strain ATCC 51908 / MS32).